Reading from the N-terminus, the 159-residue chain is Phosphopantetheine adenylyltransferase (159 aa).

Position 10 (T10) interacts with substrate. ATP-binding positions include 10–11 (TF) and H18. Residues K42, M74, and R88 each contribute to the substrate site. ATP contacts are provided by residues 89–91 (GLR), E99, and 124–130 (WSFISSS).

This sequence belongs to the bacterial CoaD family. Homohexamer. Mg(2+) is required as a cofactor.

The protein resides in the cytoplasm. The enzyme catalyses (R)-4'-phosphopantetheine + ATP + H(+) = 3'-dephospho-CoA + diphosphate. It participates in cofactor biosynthesis; coenzyme A biosynthesis; CoA from (R)-pantothenate: step 4/5. In terms of biological role, reversibly transfers an adenylyl group from ATP to 4'-phosphopantetheine, yielding dephospho-CoA (dPCoA) and pyrophosphate. The polypeptide is Phosphopantetheine adenylyltransferase (Enterobacter sp. (strain 638)).